Reading from the N-terminus, the 444-residue chain is 23S rRNA (uracil(1939)-C(5))-methyltransferase RlmD (444 aa).

The 60-residue stretch at 5-64 folds into the TRAM domain; that stretch reads KPKLNLTSQTARIVNLSHDGRGIARVNGKATFIQGALPGEVVEFQYTRVKKDFDEGKLLS. The [4Fe-4S] cluster site is built by C77, C83, C86, and C166. Residues Q276, F305, N310, E326, N353, and D374 each coordinate S-adenosyl-L-methionine. C400 serves as the catalytic Nucleophile.

This sequence belongs to the class I-like SAM-binding methyltransferase superfamily. RNA M5U methyltransferase family. RlmD subfamily.

The enzyme catalyses uridine(1939) in 23S rRNA + S-adenosyl-L-methionine = 5-methyluridine(1939) in 23S rRNA + S-adenosyl-L-homocysteine + H(+). In terms of biological role, catalyzes the formation of 5-methyl-uridine at position 1939 (m5U1939) in 23S rRNA. The polypeptide is 23S rRNA (uracil(1939)-C(5))-methyltransferase RlmD (Legionella pneumophila (strain Paris)).